The following is a 401-amino-acid chain: Sodium/glutamate symporter (401 aa).

Topologically, residues 1-6 (MFHLDT) are periplasmic. A helical membrane pass occupies residues 7–24 (LATLVAATLTLLLGRKLV). Residues 25–32 (HSVSFLKK) lie on the Cytoplasmic side of the membrane. A helical membrane pass occupies residues 33–52 (YTIPEPVAGGLLVALALLVL). The Periplasmic segment spans residues 53 to 69 (KKSMGWEVNFDMSLRDP). The chain crosses the membrane as a helical span at residues 70-87 (LMLAFFATIGLNANIASL). The Cytoplasmic segment spans residues 88 to 93 (RAGGRV). A helical membrane pass occupies residues 94 to 116 (VGIFLIVVVGLLVMQNAIGIGMA). Residues 117–156 (SLLGLDPLMGLLAGSITLSGGHGTGAAWSKLFIERYGFTN) lie on the Periplasmic side of the membrane. Residues 157 to 179 (ATEVAMACATFGLVLGGLIGGPV) form a helical membrane-spanning segment. The Cytoplasmic segment spans residues 180–212 (ARYLVKHSTTPNGIPDDQEVPTAFEKPDVGRMI). Residues 213-235 (TSLVLIETIALIAICLTVGKIVA) traverse the membrane as a helical segment. The Periplasmic portion of the chain corresponds to 236-244 (QLLAGTAFE). Residues 245–267 (LPTFVCVLFVGVILSNGLSIMGF) traverse the membrane as a helical segment. Topologically, residues 268–276 (YRVFERAVS) are cytoplasmic. The helical transmembrane segment at 277–292 (VLGNVSLSLFLAMALM) threads the bilayer. Over 293-301 (GLKLWELAS) the chain is Periplasmic. Residues 302–324 (LALPMLAILVVQTIFMALYAIFV) traverse the membrane as a helical segment. Residues 325–367 (TWRMMGKNYDAAVLAAGHCGFGLGATPTAIANMQAITERFGPS) lie on the Cytoplasmic side of the membrane. Residues 368–390 (HMAFLVVPMVGAFFIDIVNALVI) traverse the membrane as a helical segment. At 391–401 (KLYLMLPIFAG) the chain is on the periplasmic side.

It belongs to the glutamate:Na(+) symporter (ESS) (TC 2.A.27) family.

The protein localises to the cell inner membrane. Inhibited by the uncoupler carbonylcyanide m-chlorophenylhydrazone (CCCP) and the ionophore monensin. Its function is as follows. Catalyzes the sodium-dependent, binding-protein-independent transport of glutamate. The sequence is that of Sodium/glutamate symporter from Escherichia coli (strain K12).